The primary structure comprises 541 residues: Neutral amino acid transporter B(0) (541 aa).

An N-acetylmethionine modification is found at M1. Positions 1-10 (MVADPPKGDP) are enriched in basic and acidic residues. The segment at 1-32 (MVADPPKGDPKGLAAVEPTANGAPAQDPLEDS) is disordered. At 1–52 (MVADPPKGDPKGLAAVEPTANGAPAQDPLEDSGAAVGRCCSSRDQVRRCLRA) the chain is on the cytoplasmic side. A helical membrane pass occupies residues 53–82 (NLLVLLTVVAVVAGVALGLAVSGAGGALAL). At 83–95 (GPARLIAFAFPGE) the chain is on the extracellular side. Residues 96–117 (LLLRLLKMIILPLVVCSLVGGA) form a helical membrane-spanning segment. The Cytoplasmic portion of the chain corresponds to 118 to 131 (ASLDPSALGRLGAW). The helical transmembrane segment at 132 to 154 (ALLFFLVTTLLASALGVGLALAL) threads the bilayer. At 155–225 (QPGAAFAAMN…GTLVKVPVAH (71 aa)) the chain is on the extracellular side. N-linked (GlcNAc...) asparagine glycans are attached at residues N164 and N215. A helical membrane pass occupies residues 226–249 (EEEGMNILGLVVFAIVFGVALRKL). Residues 250–258 (GPEGEPLIR) are Cytoplasmic-facing. Residues 259-286 (FFNSFNDATMVLVSWIMWYAPVGILFLV) form a helical membrane-spanning segment. Residues 287-307 (ASKIVEMDDVGVLFASLGKYI) are Extracellular-facing. The helical transmembrane segment at 308–329 (LCCLLGHAIHGLLVLPLIYFLF) threads the bilayer. Over 330–334 (TRKNP) the chain is Cytoplasmic. An intramembrane region (discontinuously helical) is located at residues 335 to 365 (YRFLWGILTPLAMAFGTSSSSATLPLMMKCV). The Cytoplasmic portion of the chain corresponds to 366-374 (EERNGVAKH). The chain crosses the membrane as a helical span at residues 375 to 401 (ISRFVLPIGATVNMDGAALFQCVAAVF). G383, T385, and N387 together coordinate Na(+). Residues 402-414 (IAQLNRQSLDFVK) lie on the Extracellular side of the membrane. The discontinuously helical intramembrane region spans 415–448 (IITILVTATASSVGAAGIPAGGVLTLAIILEAVS). Residues 449–461 (LPVSEISLILAVD) lie on the Extracellular side of the membrane. Residues 462–483 (WLVDRSCTIINVEGDAFGAGLL) form a helical membrane-spanning segment. Na(+) contacts are provided by N472 and D476. The Cytoplasmic portion of the chain corresponds to 484-541 (QHYVDRTEQRGSEPELTQVKSEVPLGSLPAPNEEGNPLLRHSPGAAGDAGACEKESVM). The disordered stretch occupies residues 493–541 (RGSEPELTQVKSEVPLGSLPAPNEEGNPLLRHSPGAAGDAGACEKESVM). A phosphoserine mark is found at S495, S504, and S539.

Belongs to the dicarboxylate/amino acid:cation symporter (DAACS) (TC 2.A.23) family. SLC1A5 subfamily. In terms of assembly, homotrimer.

The protein resides in the cell membrane. Its subcellular location is the melanosome. It catalyses the reaction L-glutamine(out) + L-serine(in) + Na(+)(out) = L-glutamine(in) + L-serine(out) + Na(+)(in). It carries out the reaction L-glutamine(in) + L-serine(out) + Na(+)(out) = L-glutamine(out) + L-serine(in) + Na(+)(in). The enzyme catalyses L-threonine(in) + L-glutamine(out) + Na(+)(out) = L-threonine(out) + L-glutamine(in) + Na(+)(in). The catalysed reaction is L-threonine(out) + L-glutamine(in) + Na(+)(out) = L-threonine(in) + L-glutamine(out) + Na(+)(in). It catalyses the reaction L-asparagine(in) + L-glutamine(out) + Na(+)(out) = L-asparagine(out) + L-glutamine(in) + Na(+)(in). It carries out the reaction L-asparagine(out) + L-glutamine(in) + Na(+)(out) = L-asparagine(in) + L-glutamine(out) + Na(+)(in). The enzyme catalyses L-glutamine(in) + L-alanine(out) + Na(+)(out) = L-glutamine(out) + L-alanine(in) + Na(+)(in). The catalysed reaction is L-valine(out) + L-glutamine(in) + Na(+)(out) = L-valine(in) + L-glutamine(out) + Na(+)(in). It catalyses the reaction L-glutamine(in) + L-methionine(out) + Na(+)(out) = L-glutamine(out) + L-methionine(in) + Na(+)(in). It carries out the reaction L-glutamine(in) + L-glutamate(out) + Na(+)(out) + H(+)(out) = L-glutamine(out) + L-glutamate(in) + Na(+)(in) + H(+)(in). The enzyme catalyses D-serine(in) + L-glutamine(out) + Na(+)(out) = D-serine(out) + L-glutamine(in) + Na(+)(in). The catalysed reaction is D-serine(in) + L-alanine(out) + Na(+)(out) = D-serine(out) + L-alanine(in) + Na(+)(in). It catalyses the reaction nitrate(in) = nitrate(out). It carries out the reaction iodide(out) = iodide(in). The enzyme catalyses thiocyanate(in) = thiocyanate(out). Its function is as follows. Sodium-coupled antiporter of neutral amino acids. In a tri-substrate transport cycle, exchanges neutral amino acids between the extracellular and intracellular compartments, coupled to the inward cotransport of at least one sodium ion. The preferred substrate is the essential amino acid L-glutamine, a precursor for biosynthesis of proteins, nucleotides and amine sugars as well as an alternative fuel for mitochondrial oxidative phosphorylation. Exchanges L-glutamine with other neutral amino acids such as L-serine, L-threonine and L-asparagine in a bidirectional way. Provides L-glutamine to proliferating stem and activated cells driving the metabolic switch toward cell differentiation. The transport cycle is usually pH-independent, with the exception of L-glutamate. Transports extracellular L-glutamate coupled to the cotransport of one proton and one sodium ion in exchange for intracellular L-glutamine counter-ion. May provide for L-glutamate uptake in glial cells regulating glutamine/glutamate cycle in the nervous system. Can transport D-amino acids. Mediates D-serine release from the retinal glia potentially affecting NMDA receptor function in retinal neurons. Displays sodium- and amino acid-dependent but uncoupled channel-like anion conductance with a preference SCN(-) &gt;&gt; NO3(-) &gt; I(-) &gt; Cl(-). Through binding of the fusogenic protein syncytin-1/ERVW-1 may mediate trophoblasts syncytialization, the spontaneous fusion of their plasma membranes, an essential process in placental development. The chain is Neutral amino acid transporter B(0) (SLC1A5) from Oryctolagus cuniculus (Rabbit).